We begin with the raw amino-acid sequence, 194 residues long: Fibroblast growth factor 7 (194 aa).

The first 31 residues, 1–31, serve as a signal peptide directing secretion; the sequence is MRKWILTRILPTPLYRPCFHLVCLVGTISLA. Asn-45 and Asn-149 each carry an N-linked (GlcNAc...) asparagine glycan.

The protein belongs to the heparin-binding growth factors family. As to quaternary structure, interacts with FGFBP1. Interacts with FGFR2. Affinity between fibroblast growth factors (FGFs) and their receptors is increased by heparan sulfate glycosaminoglycans that function as coreceptors.

Its function is as follows. Growth factor active on keratinocytes. Possible major paracrine effector of normal epithelial cell proliferation. This Rattus norvegicus (Rat) protein is Fibroblast growth factor 7 (Fgf7).